The following is a 1098-amino-acid chain: Contactin-5 (1098 aa).

Residues 1 to 23 (MASCWRLILFLSVTRWLSDYSEA) form the signal peptide. Ig-like C2-type domains are found at residues 98 to 189 (PVFV…ATLQ), 195 to 281 (NFSG…RVLS), 299 to 384 (PKIE…GQLQ), 389 to 473 (PHWV…AELK), 479 to 568 (PSFE…LSVK), and 570 to 659 (PTRI…DSVS). C122 and C172 form a disulfide bridge. 2 N-linked (GlcNAc...) asparagine glycosylation sites follow: N137 and N195. Intrachain disulfides connect C216/C268 and C321/C368. N396, N448, and N539 each carry an N-linked (GlcNAc...) asparagine glycan. Intrachain disulfides connect C410–C457, C502–C550, and C592–C649. Fibronectin type-III domains lie at 672–770 (PPGV…TNEA), 775–872 (APSN…SAEG), 877–971 (APTD…TKRH), and 976–1066 (PPGN…SYSG). Residues N778, N815, and N930 are each glycosylated (N-linked (GlcNAc...) asparagine). The disordered stretch occupies residues 956 to 982 (GYGPPSREASTTTKRHPPREPPGNLRW). N1001 is a glycosylation site (N-linked (GlcNAc...) asparagine). Residue S1071 is the site of GPI-anchor amidated serine attachment. The propeptide at 1072-1098 (AQSTLHSLSKWSSVTLLLALMLPSSSW) is removed in mature form.

This sequence belongs to the immunoglobulin superfamily. Contactin family. As to quaternary structure, interacts with PTPRG. In terms of tissue distribution, expressed in the nervous system. Preferentially expressed in the central auditory pathways.

It localises to the cell membrane. Its function is as follows. Contactins mediate cell surface interactions during nervous system development. Has some neurite outgrowth-promoting activity in the cerebral cortical neurons but not in hippocampal neurons. Involved in neuronal activity in the auditory system. This Mus musculus (Mouse) protein is Contactin-5 (Cntn5).